We begin with the raw amino-acid sequence, 2549 residues long: Serine/threonine-protein kinase mTOR (2549 aa).

Methionine 1 carries the N-acetylmethionine modification. Residues 1–651 (MLGTGPAAAT…HVVSQTAVQV (651 aa)) are interaction with NBN. 32 HEAT repeats span residues 16–53 (SSNVSVLQQFASGLKSRNEETRAKAAKELQHYVTMELR), 55–99 (MSQE…VEGG), 100–137 (NATRIGRFANYLRNLLPSNDPVVMEMASKAIGRLAMAG), 138–179 (DTFT…AISV), 180–220 (PTFF…LILT), 222–276 (QREP…RISS), 277–313 (MEGERLREEMEEITQQQLVHDKYCKDLMGFGTKPRHI), 314–364 (TPFT…CCRD), 365–409 (LMEE…AFTD), 410–445 (TQYLQDTMNHVLSCVKKEKERTAAFQALGLLSVAVR), 446–494 (SEFK…RAMG), 495–529 (PGIQQDIKELLEPMLAVGLSPALTAVLYDLSRQIP), 530–563 (QLKKDIQDGLLKMLSLVLMHKPLRHPGMPKGLAH), 564–596 (QLASPGLTTLPEASDVGSITLALRTLGSFEFEG), 597–636 (HSLTQFVRHCADHFLNSEHKEIRMEAARTCSRLLTPSIHL), 637–683 (ISGH…DERF), 686–724 (HLAQAENLQALFVALNDQVFEIRELAICTVGRLSSMNPA), 727–766 (MPFLRKMLIQILTELEHSGIGRIKEQSARMLGHLVSNAPR), 769–811 (RPYM…VSGL), 814–853 (RKWVDELFIIIMDMLQDSSLLAKRQVALWTLGQLVASTGY), 857–893 (PYRKYPTLLEVLLNFLKTEQNQGTRREAIRVLGLLGA), 894–942 (LDPY…GNLP), 943–988 (LDEF…KCVQ), 989–1027 (FLPQVMPTFLNVIRVCDGAIREFLFQQLGMLVSFVKSHI), 1029–1068 (PYMDEIVTLMREFWVMNTSIQSTIILLIEQIVVALGGEFK), 1069–1105 (LYLPQLIPHMLRVFMHDNSPGRIVSIKLLAAIQLFGA), 1106–1144 (NLDDYLHLLLPPIVKLFDAPEAPLPSRKAALETVDRLTE), 1145–1188 (SLDF…GKKY), 1189–1225 (QIFIPMVNKVLVRHRINHQRYDVLICRIVKGYTLADE), 1226–1273 (EEDP…GAAR), 1274–1311 (RVSKDDWLEWLRRLSLELLKDSSSPSLRSCWALAQAYN), and 1312–1345 (PMARDLFNAAFVSCWSELNEDQQDELIRSIELAL). A Phosphoserine modification is found at serine 567. Threonine 1162 carries the post-translational modification Phosphothreonine. Lysine 1218 is modified (N6-acetyllysine). Serine 1261 is subject to Phosphoserine. TPR repeat units follow at residues 1346 to 1382 (TSQDIAEVTQTLLNLAEFMEHSDKGPLPLRDDNGIVL), 1383 to 1408 (LGERAAKCRAYAKALHYKELEFQKGP), 1409 to 1442 (TPAILESLISINNKLQQPEAAAGVLEYAMKHFGE), 1443 to 1473 (LEIQATWYEKLHEWEDALVAYDKKMDTNKDD), 1474 to 1507 (PELMLGRMRCLEALGEWGQLHQQCCEKWTLVNDE), 1508 to 1541 (TQAKMARMAAAAAWGLGQWDSMEEYTCMIPRDTH), 1542 to 1574 (DGAFYRAVLALHQDLFSLAQQCIDKARDLLDAE), 1575 to 1614 (LTAMAGESYSRAYGAMVSCHMLSELEEVIQYKLVPERREI), 1615 to 1649 (IRQIWWERLQGCQRIVEDWQKILMVRSLVVSPHED), 1650 to 1693 (MRTW…PTVH), 1694 to 1731 (PQVTYAYMKNMWKSARKIDAFQHMQHFVQTMQQQAQHA), 1732 to 1786 (IATE…DRSW), 1787 to 1846 (YKAW…STEG), 1898 to 1930 (NNLQDTLRVLTLWFDYGHWPDVNEALVEGVKAI), 1931 to 1970 (QIDTWLQVIPQLIARIDTPRPLVGRLIHQLLTDIGRYHPQ), and 1971 to 2005 (ALIYPLTVASKSTTTARHNAANKILKNMCEHSNTL). Residues 1382–1982 (LLGERAAKCR…IYPLTVASKS (601 aa)) form the FAT domain. Positions 1662, 1702, and 1749 each coordinate 1D-myo-inositol hexakisphosphate. The segment at 1812 to 1867 (DEKKKLRHASGANITNATTAATTAATATTTASTEGSNSESEAESTENSPTPSPLQK) is disordered. Residues 1820-1860 (ASGANITNATTAATTAATATTTASTEGSNSESEAESTENSP) are compositionally biased toward low complexity. Residues 2012 to 2144 (VSEELIRVAI…DLELAVPGTY (133 aa)) are sufficient for interaction with the FKBP1A/rapamycin complex. Lysine 2066 participates in a covalent cross-link: Glycyl lysine isopeptide (Lys-Gly) (interchain with G-Cter in ubiquitin). A PI3K/PI4K catalytic domain is found at 2156 to 2469 (IAPSLQVITS…GVELGEPAHK (314 aa)). Serine 2159 is modified (phosphoserine; by TBK1). Residues 2162 to 2168 (VITSKQR) are G-loop. Residue threonine 2164 is modified to Phosphothreonine. The ATP site is built by serine 2165 and glutamine 2167. Position 2173 is a phosphothreonine; by PKB/AKT1 (threonine 2173). Residues leucine 2185, lysine 2187, glutamate 2190, tyrosine 2225, glycine 2238, tryptophan 2239, valine 2240, and threonine 2245 each contribute to the ATP site. Residues 2258 to 2296 (KILLNIEHRIMLRMAPDYDHLTLMQKVEVFEHAVNNTAG) are interaction with MLST8. The catalytic loop stretch occupies residues 2335 to 2343 (GLGDRHPSN). Residue asparagine 2343 coordinates Mg(2+). Residues methionine 2345 and isoleucine 2356 each contribute to the ATP site. Residues 2355-2380 (HIDFGDCFEVAMTREKFPEKIPFRLT) form an activation loop region. Position 2357 (aspartate 2357) interacts with Mg(2+). The residue at position 2446 (threonine 2446) is a Phosphothreonine; by RPS6KB1. The residue at position 2448 (serine 2448) is a Phosphoserine; by RPS6KB1. Position 2478 is a phosphoserine (serine 2478). A Phosphoserine; by autocatalysis modification is found at serine 2481. An FATC domain is found at 2517 to 2549 (DTLDVPTQVELLIKQATSHENLCQCYIGWCPFW).

This sequence belongs to the PI3/PI4-kinase family. In terms of assembly, part of the mechanistic target of rapamycin complex 1 (mTORC1) which contains MTOR, MLST8 and RPTOR. The mTORC1 complex is a 1 Md obligate dimer of two stoichiometric heterotetramers with overall dimensions of 290 A x 210 A x 135 A. It has a rhomboid shape and a central cavity, the dimeric interfaces are formed by interlocking interactions between the two MTOR and the two RPTOR subunits. The MLST8 subunit forms distal foot-like protuberances, and contacts only one MTOR within the complex, while the small AKT1S1/PRAS40 localizes to the midsection of the central core, in close proximity to RPTOR. mTORC1 associates with AKT1S1/PRAS40, which inhibits its activity by blocking MTOR substrate-recruitment site. Component of the mechanistic target of rapamycin complex 2 (mTORC2), consisting in two heterotretramers composed of MTOR, MLST8, RICTOR and MAPKAP1/SIN1. Interacts with PLPP7 and PML. Interacts with PRR5 and RICTOR; the interaction is direct within the mTORC2 complex and interaction with RICTOR is enhanced by deubiquitination of RICTOR by USP9X. mTORC1 and mTORC2 associate with DEPTOR, which regulates their activity. Interacts with WAC; WAC positively regulates MTOR activity by promoting the assembly of the TTT complex composed of TELO2, TTI1 and TTI2 and the RUVBL complex composed of RUVBL1 and RUVBL2 into the TTT-RUVBL complex which leads to the dimerization of the mTORC1 complex and its subsequent activation. Interacts with UBQLN1. Interacts with TTI1 and TELO2. Interacts with CLIP1; phosphorylates and regulates CLIP1. Interacts with NBN. Interacts with HTR6. Interacts with BRAT1. Interacts with MEAK7 (via C-terminal domain); the interaction increases upon nutrient stimulation. Interacts with TM4SF5; the interaction is positively regulated by arginine and is negatively regulated by leucine. Interacts with GPR137B. Interacts with NCKAP1L. Interacts with TPCN1 and TPCN2; the interaction is required for TPCN1 and TPCN2 sensitivity to ATP. Interacts with ATP6V1A and with CRYAB, forming a ternary complex. Interacts with SLC38A7; this interaction mediates the recruitment of mTORC1 to the lysosome and its subsequent activation. Interacts with TSPAN8. In terms of processing, autophosphorylates when part of mTORC1 or mTORC2. Phosphorylation at Ser-1261, Ser-2159 and Thr-2164 promotes autophosphorylation. Phosphorylated at Ser-2448 by RPS6KB1. Phosphorylation in the kinase domain modulates the interactions of MTOR with RPTOR and AKT1S1/PRAS40 and leads to increased intrinsic mTORC1 kinase activity. Phosphorylation at Ser-2159 by TBK1 in response to growth factors and pathogen recognition receptors promotes mTORC1 activity. Phosphorylation at Ser-2159 by TBK1 in response to EGF growth factor promotes mTORC2 activity, leading to AKT1 phosphorylation and activation. Phosphorylation at Thr-2173 in the ATP-binding region by AKT1 strongly reduces kinase activity. Ubiquitinated at Lys-2066 by the SCF(FBXO22) complex via 'Lys-27'-linked ubiquitination prevents mTORC1 substrate recruitment. In terms of tissue distribution, expressed in numerous tissues, with highest levels in testis.

Its subcellular location is the lysosome membrane. It is found in the endoplasmic reticulum membrane. The protein resides in the golgi apparatus membrane. It localises to the cell membrane. The protein localises to the mitochondrion outer membrane. Its subcellular location is the cytoplasm. It is found in the nucleus. The protein resides in the PML body. It localises to the microsome membrane. The protein localises to the cytoplasmic vesicle. Its subcellular location is the phagosome. It catalyses the reaction L-seryl-[protein] + ATP = O-phospho-L-seryl-[protein] + ADP + H(+). It carries out the reaction L-threonyl-[protein] + ATP = O-phospho-L-threonyl-[protein] + ADP + H(+). The catalysed reaction is L-tyrosyl-[protein] + ATP = O-phospho-L-tyrosyl-[protein] + ADP + H(+). Its activity is regulated as follows. The mTORC1 complex is activated in response to nutrients, growth factors or amino acids: activation requires relocalization of the mTORC1 complex to lysosomes that is mediated by the Ragulator complex, SLC38A9, and the Rag GTPases RagA/RRAGA, RagB/RRAGB, RagC/RRAGC and RagD/RRAGD. Activation of mTORC1 by growth factors such as insulin involves AKT1-mediated phosphorylation of TSC1-TSC2, which leads to the activation of the RHEB GTPase a potent activator of the protein kinase activity of mTORC1. Insulin-stimulated and amino acid-dependent phosphorylation at Ser-1261 promotes autophosphorylation and the activation of mTORC1. On the other hand, low cellular energy levels can inhibit mTORC1 through activation of PRKAA1 while hypoxia inhibits mTORC1 through a REDD1-dependent mechanism which may also require PRKAA1. The kinase activity of MTOR within the mTORC1 complex is positively regulated by MLST8. The kinase activity of MTOR is inhibited by DEPTOR and AKT1S1. The non-canonical mTORC1 complex is independent of the RHEB GTPase and specifically mediates phosphorylation of MiT/TFE factors TFEB and TFE3 but not other mTORC1 substrates: it is activated by FLCN, which activates Rag GTPases RagC/RRAGC and RagD/RRAGD. MTOR is the target of the immunosuppressive and anti-cancer drug rapamycin which acts in complex with FKBP1A/FKBP12, and specifically inhibits its kinase activity. mTORC2 is also activated by growth factors, but seems to be nutrient-insensitive. mTORC2 associates and is directly activated by ribosomes. mTORC2 may also be regulated by RHEB but in an indirect manner through the PI3K signaling pathway. In terms of biological role, serine/threonine protein kinase which is a central regulator of cellular metabolism, growth and survival in response to hormones, growth factors, nutrients, energy and stress signals. MTOR directly or indirectly regulates the phosphorylation of at least 800 proteins. Functions as part of 2 structurally and functionally distinct signaling complexes mTORC1 and mTORC2 (mTOR complex 1 and 2). In response to nutrients, growth factors or amino acids, mTORC1 is recruited to the lysosome membrane and promotes protein, lipid and nucleotide synthesis by phosphorylating key regulators of mRNA translation and ribosome synthesis. This includes phosphorylation of EIF4EBP1 and release of its inhibition toward the elongation initiation factor 4E (eiF4E). Moreover, phosphorylates and activates RPS6KB1 and RPS6KB2 that promote protein synthesis by modulating the activity of their downstream targets including ribosomal protein S6, eukaryotic translation initiation factor EIF4B, and the inhibitor of translation initiation PDCD4. Stimulates the pyrimidine biosynthesis pathway, both by acute regulation through RPS6KB1-mediated phosphorylation of the biosynthetic enzyme CAD, and delayed regulation, through transcriptional enhancement of the pentose phosphate pathway which produces 5-phosphoribosyl-1-pyrophosphate (PRPP), an allosteric activator of CAD at a later step in synthesis, this function is dependent on the mTORC1 complex. Regulates ribosome synthesis by activating RNA polymerase III-dependent transcription through phosphorylation and inhibition of MAF1 an RNA polymerase III-repressor. Activates dormant ribosomes by mediating phosphorylation of SERBP1, leading to SERBP1 inactivation and reactivation of translation. In parallel to protein synthesis, also regulates lipid synthesis through SREBF1/SREBP1 and LPIN1. To maintain energy homeostasis mTORC1 may also regulate mitochondrial biogenesis through regulation of PPARGC1A. In the same time, mTORC1 inhibits catabolic pathways: negatively regulates autophagy through phosphorylation of ULK1. Under nutrient sufficiency, phosphorylates ULK1 at 'Ser-758', disrupting the interaction with AMPK and preventing activation of ULK1. Also prevents autophagy through phosphorylation of the autophagy inhibitor DAP. Also prevents autophagy by phosphorylating RUBCNL/Pacer under nutrient-rich conditions. Prevents autophagy by mediating phosphorylation of AMBRA1, thereby inhibiting AMBRA1 ability to mediate ubiquitination of ULK1 and interaction between AMBRA1 and PPP2CA. mTORC1 exerts a feedback control on upstream growth factor signaling that includes phosphorylation and activation of GRB10 a INSR-dependent signaling suppressor. Among other potential targets mTORC1 may phosphorylate CLIP1 and regulate microtubules. The mTORC1 complex is inhibited in response to starvation and amino acid depletion. The non-canonical mTORC1 complex, which acts independently of RHEB, specifically mediates phosphorylation of MiT/TFE factors MITF, TFEB and TFE3 in the presence of nutrients, promoting their cytosolic retention and inactivation. Upon starvation or lysosomal stress, inhibition of mTORC1 induces dephosphorylation and nuclear translocation of TFEB and TFE3, promoting their transcription factor activity. The mTORC1 complex regulates pyroptosis in macrophages by promoting GSDMD oligomerization. MTOR phosphorylates RPTOR which in turn inhibits mTORC1. As part of the mTORC2 complex, MTOR transduces signals from growth factors to pathways involved in proliferation, cytoskeletal organization, lipogenesis and anabolic output. In response to growth factors, mTORC2 phosphorylates and activates AGC protein kinase family members, including AKT (AKT1, AKT2 and AKT3), PKC (PRKCA, PRKCB and PRKCE) and SGK1. In contrast to mTORC1, mTORC2 is nutrient-insensitive. mTORC2 plays a critical role in AKT1 activation by mediating phosphorylation of different sites depending on the context, such as 'Thr-450', 'Ser-473', 'Ser-477' or 'Thr-479', facilitating the phosphorylation of the activation loop of AKT1 on 'Thr-308' by PDPK1/PDK1 which is a prerequisite for full activation. mTORC2 also regulates the phosphorylation of SGK1 at 'Ser-422'. mTORC2 may regulate the actin cytoskeleton, through phosphorylation of PRKCA, PXN and activation of the Rho-type guanine nucleotide exchange factors RHOA and RAC1A or RAC1B. The mTORC2 complex also phosphorylates various proteins involved in insulin signaling, such as FBXW8 and IGF2BP1. May also regulate insulin signaling by acting as a tyrosine protein kinase that catalyzes phosphorylation of IGF1R and INSR; additional evidence are however required to confirm this result in vivo. Regulates osteoclastogenesis by adjusting the expression of CEBPB isoforms. Plays an important regulatory role in the circadian clock function; regulates period length and rhythm amplitude of the suprachiasmatic nucleus (SCN) and liver clocks. The chain is Serine/threonine-protein kinase mTOR from Homo sapiens (Human).